The following is a 248-amino-acid chain: 3-deoxy-manno-octulosonate cytidylyltransferase (248 aa).

This sequence belongs to the KdsB family.

The protein localises to the cytoplasm. It catalyses the reaction 3-deoxy-alpha-D-manno-oct-2-ulosonate + CTP = CMP-3-deoxy-beta-D-manno-octulosonate + diphosphate. Its pathway is nucleotide-sugar biosynthesis; CMP-3-deoxy-D-manno-octulosonate biosynthesis; CMP-3-deoxy-D-manno-octulosonate from 3-deoxy-D-manno-octulosonate and CTP: step 1/1. It functions in the pathway bacterial outer membrane biogenesis; lipopolysaccharide biosynthesis. Activates KDO (a required 8-carbon sugar) for incorporation into bacterial lipopolysaccharide in Gram-negative bacteria. The protein is 3-deoxy-manno-octulosonate cytidylyltransferase of Enterobacter sp. (strain 638).